We begin with the raw amino-acid sequence, 121 residues long: Fluoride-specific ion channel FluC 1 (121 aa).

4 helical membrane-spanning segments follow: residues Y3 to L23, I29 to A49, T67 to F87, and F92 to L112. Na(+)-binding residues include G71 and T74.

Belongs to the fluoride channel Fluc/FEX (TC 1.A.43) family.

It is found in the cell membrane. It catalyses the reaction fluoride(in) = fluoride(out). With respect to regulation, na(+) is not transported, but it plays an essential structural role and its presence is essential for fluoride channel function. In terms of biological role, fluoride-specific ion channel. Important for reducing fluoride concentration in the cell, thus reducing its toxicity. The protein is Fluoride-specific ion channel FluC 1 of Staphylococcus epidermidis (strain ATCC 35984 / DSM 28319 / BCRC 17069 / CCUG 31568 / BM 3577 / RP62A).